A 156-amino-acid chain; its full sequence is ATP synthase subunit b 1 (156 aa).

The chain crosses the membrane as a helical span at residues 7–29; it reads LLGQAISFALFVWFCMKYVWPPL.

Belongs to the ATPase B chain family. F-type ATPases have 2 components, F(1) - the catalytic core - and F(0) - the membrane proton channel. F(1) has five subunits: alpha(3), beta(3), gamma(1), delta(1), epsilon(1). F(0) has three main subunits: a(1), b(2) and c(10-14). The alpha and beta chains form an alternating ring which encloses part of the gamma chain. F(1) is attached to F(0) by a central stalk formed by the gamma and epsilon chains, while a peripheral stalk is formed by the delta and b chains.

It localises to the cell inner membrane. In terms of biological role, f(1)F(0) ATP synthase produces ATP from ADP in the presence of a proton or sodium gradient. F-type ATPases consist of two structural domains, F(1) containing the extramembraneous catalytic core and F(0) containing the membrane proton channel, linked together by a central stalk and a peripheral stalk. During catalysis, ATP synthesis in the catalytic domain of F(1) is coupled via a rotary mechanism of the central stalk subunits to proton translocation. Component of the F(0) channel, it forms part of the peripheral stalk, linking F(1) to F(0). The protein is ATP synthase subunit b 1 of Vibrio campbellii (strain ATCC BAA-1116).